Here is a 626-residue protein sequence, read N- to C-terminus: Phosphomethylpyrimidine synthase (626 aa).

Positions Ala-92 to Asp-106 are enriched in basic and acidic residues. A disordered region spans residues Ala-92–Val-117. Substrate-binding positions include Asn-219, Met-248, Tyr-277, His-313, Ser-333–Gly-335, Asp-374–Arg-377, and Glu-413. Position 417 (His-417) interacts with Zn(2+). Tyr-440 is a binding site for substrate. Residue His-481 participates in Zn(2+) binding. [4Fe-4S] cluster contacts are provided by Cys-561, Cys-564, and Cys-569.

The protein belongs to the ThiC family. Homodimer. Requires [4Fe-4S] cluster as cofactor.

The enzyme catalyses 5-amino-1-(5-phospho-beta-D-ribosyl)imidazole + S-adenosyl-L-methionine = 4-amino-2-methyl-5-(phosphooxymethyl)pyrimidine + CO + 5'-deoxyadenosine + formate + L-methionine + 3 H(+). The protein operates within cofactor biosynthesis; thiamine diphosphate biosynthesis. Functionally, catalyzes the synthesis of the hydroxymethylpyrimidine phosphate (HMP-P) moiety of thiamine from aminoimidazole ribotide (AIR) in a radical S-adenosyl-L-methionine (SAM)-dependent reaction. In Novosphingobium aromaticivorans (strain ATCC 700278 / DSM 12444 / CCUG 56034 / CIP 105152 / NBRC 16084 / F199), this protein is Phosphomethylpyrimidine synthase.